The sequence spans 142 residues: Phenylalanine ammonia-lyase (142 aa).

Residues Lys-66, Glu-94, and Asn-97 each contribute to the (E)-cinnamate site.

Belongs to the PAL/histidase family. As to quaternary structure, homotetramer. Post-translationally, contains an active site 4-methylidene-imidazol-5-one (MIO), which is formed autocatalytically by cyclization and dehydration of residues Ala-Ser-Gly.

The protein resides in the cytoplasm. It catalyses the reaction L-phenylalanine = (E)-cinnamate + NH4(+). It participates in phenylpropanoid metabolism; trans-cinnamate biosynthesis; trans-cinnamate from L-phenylalanine: step 1/1. Its function is as follows. Catalyzes the non-oxidative deamination of L-phenylalanine to form trans-cinnamic acid and a free ammonium ion. Facilitates the commitment step in phenylpropanoid pathways that produce secondary metabolites such as lignins, coumarins and flavonoids. The protein is Phenylalanine ammonia-lyase (palA) of Agaricus bisporus (White button mushroom).